A 465-amino-acid chain; its full sequence is Solute carrier family 7 member 12 (465 aa).

Residues 1–6 (MQLLRA) lie on the Cytoplasmic side of the membrane. Residues 7 to 27 (LGVFHVSMILFSATLGTGIFV) traverse the membrane as a helical segment. Residues 28–39 (TPKAVLKYSSLN) are Extracellular-facing. The chain crosses the membrane as a helical span at residues 40-60 (IPVSLSIWAGCGLLSIMSALC). At 61–81 (NAEIATTYPLSGASYYFLKRT) the chain is on the cytoplasmic side. The chain crosses the membrane as a helical span at residues 82-102 (LGSSVAFLSLWIKLFAHFLGI). Residues 103–132 (GAQCLLIATSVIQCFYSGCPAPELPTKCLA) are Extracellular-facing. A helical membrane pass occupies residues 133–153 (LAILWSFGIVSARGIKTVAWF). A topological domain (cytoplasmic) is located at residue Asn-154. Residues 155-175 (TVSSFIKLSVLCLISLTVLLV) form a helical membrane-spanning segment. Residues 176 to 202 (NGKKENVSRFENALDAELPNASQIADA) lie on the Extracellular side of the membrane. Residues 203–223 (ILQVSYSYLGSSVLIVIAGEI) traverse the membrane as a helical segment. The Cytoplasmic portion of the chain corresponds to 224–234 (KRPTETIPKTL). A helical membrane pass occupies residues 235 to 255 (IYGISIVTVLYLLTNISYLAV). Residues 256–280 (LTSQEIIFSDSVGVTWMNRVFPSIQ) are Extracellular-facing. The helical transmembrane segment at 281–301 (WISSFLISAFLLGSVSCGIVS) threads the bilayer. Over 302-327 (ASRVFYSASQEGEFPSIYSMLNDHHS) the chain is Cytoplasmic. Residues 328–351 (PAVADIQIVILSSVAIISSSIIYL) traverse the membrane as a helical segment. Topologically, residues 352–356 (VKYVS) are extracellular. Residues 357 to 375 (LGSFCINLLQMIGLLKIRY) form a helical membrane-spanning segment. Residues 376–386 (QNPDIPRPYKV) are Cytoplasmic-facing. Residues 387–407 (WLPFIFGSIALSLFLIFTPVI) traverse the membrane as a helical segment. The Extracellular segment spans residues 408–409 (QS). The chain crosses the membrane as a helical span at residues 410–430 (PSIEHVYQVVFLFCGFLCYWL). The Cytoplasmic portion of the chain corresponds to 431–465 (QANLNGHATCFDTITCYCQLLFNISPSEDPEEQKN).

This sequence belongs to the amino acid-polyamine-organocation (APC) superfamily. Probably forms multimers, perhaps with an unknown protein(s). As to expression, expressed in kidney and red blood cells (at protein level). Expressed in kidney along the collecting ducts in the cortex, outer and inner medulla. May be expressed in placenta, lungs, spleen and skeletal muscles.

The protein resides in the apical cell membrane. Its subcellular location is the basal cell membrane. It is found in the cytoplasm. Probably mediates sodium- and chloride-independent uptake of neutral amino acids. This chain is Solute carrier family 7 member 12, found in Mus musculus (Mouse).